Reading from the N-terminus, the 212-residue chain is Synaptosomal-associated protein 25 (212 aa).

T-SNARE coiled-coil homology domains lie at 26–88 (QGVA…LSGM) and 148–210 (DARE…AHQL).

This sequence belongs to the SNAP-25 family. In terms of tissue distribution, exclusively found in brain and ganglia.

The protein localises to the synapse. It localises to the synaptosome. May play an important role in the synaptic function of specific neuronal systems. Associates with proteins involved in vesicle docking and membrane fusion. The polypeptide is Synaptosomal-associated protein 25 (Snap25) (Drosophila melanogaster (Fruit fly)).